We begin with the raw amino-acid sequence, 414 residues long: Serine hydroxymethyltransferase (414 aa).

Residues leucine 118 and 122–124 contribute to the (6S)-5,6,7,8-tetrahydrofolate site; that span reads GHL. Lysine 227 is subject to N6-(pyridoxal phosphate)lysine. Residues glutamate 240 and 350 to 352 each bind (6S)-5,6,7,8-tetrahydrofolate; that span reads SPF.

This sequence belongs to the SHMT family. As to quaternary structure, homodimer. Pyridoxal 5'-phosphate is required as a cofactor.

It is found in the cytoplasm. It catalyses the reaction (6R)-5,10-methylene-5,6,7,8-tetrahydrofolate + glycine + H2O = (6S)-5,6,7,8-tetrahydrofolate + L-serine. The protein operates within one-carbon metabolism; tetrahydrofolate interconversion. It functions in the pathway amino-acid biosynthesis; glycine biosynthesis; glycine from L-serine: step 1/1. Catalyzes the reversible interconversion of serine and glycine with tetrahydrofolate (THF) serving as the one-carbon carrier. This reaction serves as the major source of one-carbon groups required for the biosynthesis of purines, thymidylate, methionine, and other important biomolecules. Also exhibits THF-independent aldolase activity toward beta-hydroxyamino acids, producing glycine and aldehydes, via a retro-aldol mechanism. The polypeptide is Serine hydroxymethyltransferase (Bacillus thuringiensis (strain Al Hakam)).